A 387-amino-acid polypeptide reads, in one-letter code: Protein RecA (387 aa).

80–87 (GPESSGKT) contacts ATP. A disordered region spans residues 348 to 387 (LDDSEVAETEEETTASKTKAKAKKEEKXVETEEIELELQD). Acidic residues-rich tracts occupy residues 349–360 (DDSEVAETEEET) and 378–387 (TEEIELELQD).

The protein belongs to the RecA family.

It is found in the cytoplasm. Its function is as follows. Can catalyze the hydrolysis of ATP in the presence of single-stranded DNA, the ATP-dependent uptake of single-stranded DNA by duplex DNA, and the ATP-dependent hybridization of homologous single-stranded DNAs. It interacts with LexA causing its activation and leading to its autocatalytic cleavage. The sequence is that of Protein RecA from Lactococcus lactis subsp. cremoris (Streptococcus cremoris).